Here is a 327-residue protein sequence, read N- to C-terminus: Putative hydroxymethylpyrimidine/phosphomethylpyrimidine kinase C18B5.05c (327 aa).

Position 54 (Gln54) interacts with 4-amino-5-hydroxymethyl-2-methylpyrimidine.

This sequence belongs to the ThiD family.

Its subcellular location is the cytoplasm. It is found in the nucleus. It catalyses the reaction 4-amino-5-hydroxymethyl-2-methylpyrimidine + ATP = 4-amino-2-methyl-5-(phosphooxymethyl)pyrimidine + ADP + H(+). The enzyme catalyses 4-amino-2-methyl-5-(phosphooxymethyl)pyrimidine + ATP = 4-amino-2-methyl-5-(diphosphooxymethyl)pyrimidine + ADP. It functions in the pathway cofactor biosynthesis; thiamine diphosphate biosynthesis; 4-amino-2-methyl-5-diphosphomethylpyrimidine from 5-amino-1-(5-phospho-D-ribosyl)imidazole: step 2/3. Its pathway is cofactor biosynthesis; thiamine diphosphate biosynthesis; 4-amino-2-methyl-5-diphosphomethylpyrimidine from 5-amino-1-(5-phospho-D-ribosyl)imidazole: step 3/3. Functionally, catalyzes the phosphorylation of hydroxymethylpyrimidine phosphate (HMP-P) to HMP-PP, and of HMP to HMP-P. The polypeptide is Putative hydroxymethylpyrimidine/phosphomethylpyrimidine kinase C18B5.05c (Schizosaccharomyces pombe (strain 972 / ATCC 24843) (Fission yeast)).